Consider the following 449-residue polypeptide: Tryptophan synthase beta chain 2 (449 aa).

An N6-(pyridoxal phosphate)lysine modification is found at K116.

It belongs to the TrpB family. Tetramer of two alpha and two beta chains. The cofactor is pyridoxal 5'-phosphate.

The catalysed reaction is (1S,2R)-1-C-(indol-3-yl)glycerol 3-phosphate + L-serine = D-glyceraldehyde 3-phosphate + L-tryptophan + H2O. Its pathway is amino-acid biosynthesis; L-tryptophan biosynthesis; L-tryptophan from chorismate: step 5/5. Functionally, the beta subunit is responsible for the synthesis of L-tryptophan from indole and L-serine. The polypeptide is Tryptophan synthase beta chain 2 (trpB2) (Aeropyrum pernix (strain ATCC 700893 / DSM 11879 / JCM 9820 / NBRC 100138 / K1)).